Here is a 426-residue protein sequence, read N- to C-terminus: MKVLIVGSGGREHAIAWKISQNSKVDKIFAASGNAYNKVIKNCENINLKTSDDILNFAIKEKVDLTIVGSEELLVDGIVDKFQENNLTIFGPNKEAAMLEGSKAFAKDFMQKYGVKTAKYQSFIDKEKAIKYLDKISYPVVIKASGLAAGKGVVIAQNRKEAEETLNDMMTNKVFAAAGDTVVIEEFLDGVEISVLSITDSEVIIPFISAKDHKKISEKETGLNTGGMGVIAPNPYYTKTIEEKFIQNILNPTLKGIKAEKMNFVGIIFFGLMVANGEVYLLEYNMRMGDPETQAVLPLMKSDFLNVINSALNKDLKNIKIDWEDKSACCVVMAAGGYPVKYEKGNFISGLEKFDSNKSDNKIFFAGVKEENDKFYTNGGRVLNVVSIKDSLEKAIEEAYKNVKEISFKDNYYRKDIGTLYVPVKY.

One can recognise an ATP-grasp domain in the interval 107-313 (KDFMQKYGVK…FLNVINSALN (207 aa)). 133–194 (LDKISYPVVI…EEFLDGVEIS (62 aa)) provides a ligand contact to ATP. Mg(2+) contacts are provided by Glu-283 and Asn-285.

Belongs to the GARS family. Requires Mg(2+) as cofactor. Mn(2+) is required as a cofactor.

It catalyses the reaction 5-phospho-beta-D-ribosylamine + glycine + ATP = N(1)-(5-phospho-beta-D-ribosyl)glycinamide + ADP + phosphate + H(+). Its pathway is purine metabolism; IMP biosynthesis via de novo pathway; N(1)-(5-phospho-D-ribosyl)glycinamide from 5-phospho-alpha-D-ribose 1-diphosphate: step 2/2. The polypeptide is Phosphoribosylamine--glycine ligase (Fusobacterium nucleatum subsp. nucleatum (strain ATCC 25586 / DSM 15643 / BCRC 10681 / CIP 101130 / JCM 8532 / KCTC 2640 / LMG 13131 / VPI 4355)).